Reading from the N-terminus, the 562-residue chain is T-complex protein 1 subunit epsilon (562 aa).

Belongs to the TCP-1 chaperonin family. Heterooligomeric complex of about 850 to 900 kDa that forms two stacked rings, 12 to 16 nm in diameter.

Its subcellular location is the cytoplasm. Its function is as follows. Molecular chaperone; assists the folding of proteins upon ATP hydrolysis. Known to play a role, in vitro, in the folding of actin and tubulin. In yeast may play a role in mitotic spindle formation. In Saccharomyces cerevisiae (strain ATCC 204508 / S288c) (Baker's yeast), this protein is T-complex protein 1 subunit epsilon (CCT5).